The sequence spans 567 residues: MVEEISPKYTNEQAEASSSSSSSVSGEPKDFSGSLENQEDLGELIERTNTMTSGAESKVETNRRMSRILTGTQDDPEKIAIDYSNCPPMGGDRPFPPALPEQSQFEVTFDGPNDPIHPFNWSMKTKTIICIVLCLNCICISMGSSIFASGVPQICKIYHVIPVVAILGVTLYVFGFAASPVIYAPLSEVYGRRGVLVISAFGFAVFQFAVATSKDLQSIMICRFFGGLIGAAPMAVVPAAFADMFDVRVRGKAICLFSLGVFVGPILSPVMGSYIAQRTTWRWLEYVTGCFASALFVAVALTFKETHHPTILVQKAKEMRKSTNNWGIHAAHEHVELSVSEIAKKTITRPIKMLFTEPLLLIITIYNSFVYGILYLMLEAYPIVFVEGYGFEANGELPYIALIIGMLVCTAFLWYFENDYLKRIQKAGKLVPEARLIPMVYAGVIFPIGILWFCWTGYYPHKIHWMCPTVAGSFIGFGLMGIFLPCLNYIIESYLPLAASAVAANTFMRSAFGAVFPLFAGYMFHGMGTGWAGLLLGLFAAALIPVPLFFLKYGERIRKNSKDAYYA.

The interval 1–71 is disordered; sequence MVEEISPKYT…NRRMSRILTG (71 aa). N120 carries N-linked (GlcNAc...) asparagine glycosylation. A run of 12 helical transmembrane segments spans residues 128–148, 157–177, 194–214, 224–244, 253–273, 283–303, 358–378, 396–416, 436–456, 471–491, 498–520, and 531–551; these read IICI…SIFA, IYHV…FGFA, GVLV…ATSK, FFGG…FADM, AICL…VMGS, WLEY…ALTF, PLLL…YLML, ELPY…LWYF, LIPM…FCWT, AGSF…NYII, AASA…PLFA, and WAGL…LFFL.

Belongs to the major facilitator superfamily. DHA1 family. Polyamines/proton antiporter (TC 2.A.1.2.16) subfamily.

The protein resides in the cell membrane. Its function is as follows. Multidrug resistance transporter involved in resistance to azole antifungal drugs such as the imidazoles miconazole, ketoconazole, and tioconazole; as well as the triazoles itraconazole and fluconazole. Also plays a role in the resistance to other antifungal drug families such as the polyene amphotericin B, the pyrimide analog flucytosine, the fungicide mancozeb, and the polyamine spermine. Decreases the intracellular accumulation of clotrimazole by mediating its extrusion from cells. Involved in virulence by conferring resistance to the human antimicrobial peptide histatin-5. In Candida glabrata (strain ATCC 2001 / BCRC 20586 / JCM 3761 / NBRC 0622 / NRRL Y-65 / CBS 138) (Yeast), this protein is Multidrug transporter TPO1_1.